The sequence spans 252 residues: tRNA (guanine-N(1)-)-methyltransferase (252 aa).

S-adenosyl-L-methionine is bound by residues Gly-113 and 133–138; that span reads IGDYVL.

The protein belongs to the RNA methyltransferase TrmD family. Homodimer.

It is found in the cytoplasm. The enzyme catalyses guanosine(37) in tRNA + S-adenosyl-L-methionine = N(1)-methylguanosine(37) in tRNA + S-adenosyl-L-homocysteine + H(+). Functionally, specifically methylates guanosine-37 in various tRNAs. This Xanthomonas campestris pv. campestris (strain B100) protein is tRNA (guanine-N(1)-)-methyltransferase.